The chain runs to 361 residues: S-adenosylmethionine:tRNA ribosyltransferase-isomerase (361 aa).

It belongs to the QueA family. As to quaternary structure, monomer.

Its subcellular location is the cytoplasm. It carries out the reaction 7-aminomethyl-7-carbaguanosine(34) in tRNA + S-adenosyl-L-methionine = epoxyqueuosine(34) in tRNA + adenine + L-methionine + 2 H(+). It functions in the pathway tRNA modification; tRNA-queuosine biosynthesis. Transfers and isomerizes the ribose moiety from AdoMet to the 7-aminomethyl group of 7-deazaguanine (preQ1-tRNA) to give epoxyqueuosine (oQ-tRNA). The chain is S-adenosylmethionine:tRNA ribosyltransferase-isomerase from Rhizobium johnstonii (strain DSM 114642 / LMG 32736 / 3841) (Rhizobium leguminosarum bv. viciae).